A 182-amino-acid polypeptide reads, in one-letter code: Ferritin heavy chain (182 aa).

Met-1 is modified (N-acetylmethionine). Position 2 is an N-acetylthreonine; in Ferritin heavy chain, N-terminally processed (Thr-2). The Ferritin-like diiron domain occupies 11–160 (QNYHQDAEAA…DHVTNLRKMG (150 aa)). The Fe cation site is built by Glu-28, Glu-63, His-66, Glu-108, and Gln-142.

The protein belongs to the ferritin family. Oligomer of 24 subunits. There are two types of subunits: L (light) chain and H (heavy) chain. The major chain can be light or heavy, depending on the species and tissue type. The functional molecule forms a roughly spherical shell with a diameter of 12 nm and contains a central cavity into which the insoluble mineral iron core is deposited. Interacts with NCOA4; NCOA4 promotes targeting of the iron-binding ferritin complex to autolysosomes following starvation or iron depletion.

The protein resides in the cytoplasm. Its subcellular location is the cytoplasmic vesicle. The protein localises to the autophagosome. It is found in the autolysosome. It catalyses the reaction 4 Fe(2+) + O2 + 4 H(+) = 4 Fe(3+) + 2 H2O. Stores iron in a soluble, non-toxic, readily available form. Important for iron homeostasis. Has ferroxidase activity. Iron is taken up in the ferrous form and deposited as ferric hydroxides after oxidation. Also plays a role in delivery of iron to cells. Mediates iron uptake in capsule cells of the developing kidney. Degraded to release iron upon autophagy activation by nutrient starvation. This chain is Ferritin heavy chain (Fth1), found in Mus musculus (Mouse).